We begin with the raw amino-acid sequence, 209 residues long: Large ribosomal subunit protein uL3 (209 aa).

A disordered region spans residues 127–147; sequence YSRGPMGHGSKSHRVAGARSA.

This sequence belongs to the universal ribosomal protein uL3 family. Part of the 50S ribosomal subunit. Forms a cluster with proteins L14 and L19.

One of the primary rRNA binding proteins, it binds directly near the 3'-end of the 23S rRNA, where it nucleates assembly of the 50S subunit. The protein is Large ribosomal subunit protein uL3 of Finegoldia magna (strain ATCC 29328 / DSM 20472 / WAL 2508) (Peptostreptococcus magnus).